The primary structure comprises 216 residues: uncharacterized protein (216 aa).

4 consecutive transmembrane segments (helical) span residues I5–S27, F98–L120, V125–N147, and G185–G207.

It localises to the cell membrane. This is an uncharacterized protein from Aquifex aeolicus (strain VF5).